The following is a 417-amino-acid chain: N-acetylmuramoyl-L-alanine amidase AmiC (417 aa).

The tat-type signal signal peptide spans 1 to 31 (MSGSNTAISRRRLLQGAGAMWLLSVSQVSLA). Positions 166–185 (LEKQVPPAQSGPQPGKAGRD) are disordered. One can recognise a MurNAc-LAA domain in the interval 190 to 404 (IMLDPGHGGE…VAESILAGIK (215 aa)).

Belongs to the N-acetylmuramoyl-L-alanine amidase 3 family. In terms of processing, predicted to be exported by the Tat system. The position of the signal peptide cleavage has not been experimentally proven.

It localises to the periplasm. It carries out the reaction Hydrolyzes the link between N-acetylmuramoyl residues and L-amino acid residues in certain cell-wall glycopeptides.. In terms of biological role, cell-wall hydrolase involved in septum cleavage during cell division. This Escherichia coli O6:H1 (strain CFT073 / ATCC 700928 / UPEC) protein is N-acetylmuramoyl-L-alanine amidase AmiC (amiC).